Reading from the N-terminus, the 109-residue chain is U4-lycotoxin-Ls1b (109 aa).

The N-terminal stretch at 1-22 (MKVLVLFSVLFLTLFSYSSTEA) is a signal peptide. Residues 23–44 (IDEFDSDAEDDMLSLMANEQVR) constitute a propeptide that is removed on maturation. The interval 45–88 (AKACTPRLHDCSHDRHSCCRGELSKDVCYCFYPEGEDKTEVCSC) is knottin domain. Intrachain disulfides connect C48/C63, C55/C72, C62/C88, and C74/C86. A linear cationic cytotoxin domain region spans residues 89–108 (QQPKSHKYIEKVVDKAKTVV).

This sequence belongs to the neurotoxin 19 (CSTX) family. 05 (U4-Lctx) subfamily. Expressed by the venom gland.

The protein localises to the secreted. Functionally, enhances the high-affinity desensitization of human P2RX3 purinoceptors. This Lycosa singoriensis (Wolf spider) protein is U4-lycotoxin-Ls1b.